The following is a 253-amino-acid chain: Ethylene-responsive transcription factor RAP2-11 (253 aa).

The segment at residues 21–78 (KFVGVRQRPSGKWVAEIKDTTQKIRMWLGTFETAEEAARAYDEAACLLRGSNTRTNFA) is a DNA-binding region (AP2/ERF).

It belongs to the AP2/ERF transcription factor family. ERF subfamily.

The protein resides in the nucleus. Functionally, probably acts as a transcriptional activator. Binds to the GCC-box pathogenesis-related promoter element. May be involved in the regulation of gene expression by stress factors and by components of stress signal transduction pathways. The polypeptide is Ethylene-responsive transcription factor RAP2-11 (RAP2-11) (Arabidopsis thaliana (Mouse-ear cress)).